The chain runs to 360 residues: NAD(P)H-quinone oxidoreductase subunit 1, chloroplastic (360 aa).

8 helical membrane-spanning segments follow: residues 30–50 (FLPI…LVWL), 98–118 (FSIG…VIPF), 127–147 (FNIG…GLLM), 165–185 (AAQS…ISLL), 203–223 (FWGW…ISSL), 248–268 (YSGI…LISS), 297–317 (IFGT…FLFI), and 340–360 (FLLP…VFSL).

It belongs to the complex I subunit 1 family. NDH is composed of at least 16 different subunits, 5 of which are encoded in the nucleus.

The protein localises to the plastid. It is found in the chloroplast thylakoid membrane. It catalyses the reaction a plastoquinone + NADH + (n+1) H(+)(in) = a plastoquinol + NAD(+) + n H(+)(out). It carries out the reaction a plastoquinone + NADPH + (n+1) H(+)(in) = a plastoquinol + NADP(+) + n H(+)(out). NDH shuttles electrons from NAD(P)H:plastoquinone, via FMN and iron-sulfur (Fe-S) centers, to quinones in the photosynthetic chain and possibly in a chloroplast respiratory chain. The immediate electron acceptor for the enzyme in this species is believed to be plastoquinone. Couples the redox reaction to proton translocation, and thus conserves the redox energy in a proton gradient. This is NAD(P)H-quinone oxidoreductase subunit 1, chloroplastic from Aethionema grandiflorum (Persian stone-cress).